The following is a 131-amino-acid chain: Large ribosomal subunit protein bL20 (131 aa).

The protein belongs to the bacterial ribosomal protein bL20 family.

Its function is as follows. Binds directly to 23S ribosomal RNA and is necessary for the in vitro assembly process of the 50S ribosomal subunit. It is not involved in the protein synthesizing functions of that subunit. This chain is Large ribosomal subunit protein bL20, found in Mycolicibacterium paratuberculosis (strain ATCC BAA-968 / K-10) (Mycobacterium paratuberculosis).